We begin with the raw amino-acid sequence, 461 residues long: Ornithine decarboxylase (461 aa).

The residue at position 69 (K69) is an N6-(pyridoxal phosphate)lysine. Pyridoxal 5'-phosphate is bound by residues S200, G237, and 274–277; that span reads EPGR. S303 carries the phosphoserine; by CK2 modification. 331 to 332 is a binding site for substrate; it reads YD. The active-site Proton donor; shared with dimeric partner is C360. S-nitrosocysteine is present on C360. A substrate-binding site is contributed by D361. Y389 contacts pyridoxal 5'-phosphate.

It belongs to the Orn/Lys/Arg decarboxylase class-II family. Homodimer. Only the dimer is catalytically active, as the active sites are constructed of residues from both monomers. Does not form a heterodimer with AZIN2. It depends on pyridoxal 5'-phosphate as a cofactor. As to expression, expressed during testis development in the outer part of the seminiferous tubules.

It carries out the reaction L-ornithine + H(+) = putrescine + CO2. It participates in amine and polyamine biosynthesis; putrescine biosynthesis via L-ornithine pathway; putrescine from L-ornithine: step 1/1. Its activity is regulated as follows. Inhibited by antizymes (AZs) OAZ1, OAZ2 and OAZ3 in response to polyamine levels. AZs inhibit the assembly of the functional homodimer by binding to ODC monomers. Additionally, OAZ1 targets ODC monomers for ubiquitin-independent proteolytic destruction by the 26S proteasome. Catalyzes the first and rate-limiting step of polyamine biosynthesis that converts ornithine into putrescine, which is the precursor for the polyamines, spermidine and spermine. Polyamines are essential for cell proliferation and are implicated in cellular processes, ranging from DNA replication to apoptosis. This chain is Ornithine decarboxylase (Odc1), found in Mus musculus (Mouse).